We begin with the raw amino-acid sequence, 136 residues long: Ribosome-binding factor A (136 aa).

The segment at 116–136 is disordered; the sequence is AGNHKASDEEESDDKGHEDEQ.

This sequence belongs to the RbfA family. In terms of assembly, monomer. Binds 30S ribosomal subunits, but not 50S ribosomal subunits or 70S ribosomes.

The protein localises to the cytoplasm. Its function is as follows. One of several proteins that assist in the late maturation steps of the functional core of the 30S ribosomal subunit. Associates with free 30S ribosomal subunits (but not with 30S subunits that are part of 70S ribosomes or polysomes). Required for efficient processing of 16S rRNA. May interact with the 5'-terminal helix region of 16S rRNA. The sequence is that of Ribosome-binding factor A from Lachnoclostridium phytofermentans (strain ATCC 700394 / DSM 18823 / ISDg) (Clostridium phytofermentans).